A 773-amino-acid chain; its full sequence is ATP-dependent permease MDL2, mitochondrial (773 aa).

Residues 1–90 (MLNGRLPLLR…SPISKGSARS (90 aa)) constitute a mitochondrion transit peptide. A compositionally biased stretch (polar residues) spans 73–84 (PETSLPSASPIS). A disordered region spans residues 73–95 (PETSLPSASPISKGSARSAHAKE). In terms of domain architecture, ABC transmembrane type-1 spans 119–413 (LLTAILLLTI…LSTFYSEIMQ (295 aa)). 3 consecutive transmembrane segments (helical) span residues 123-143 (ILLLTISCSIGMSIPKVIGIV), 170-192 (FLSFFTVALLIGCAANFGRFILL), and 257-277 (VVGVGMMCSLSPQLSILLLFF). Position 481–488 (481–488 (GPSGRGKS)) interacts with ATP. The region spanning 493-733 (LLLRYYNPTT…DDNDNNHDND (241 aa)) is the ABC transporter domain. 2 stretches are compositionally biased toward basic and acidic residues: residues 706–733 (KEDLNESKEHDDQKKDDNDDNDNNHDND) and 740–762 (ETKDNNSDDIEKSVEHLLKDAAK). The interval 706 to 773 (KEDLNESKEH…ANPIKITPQP (68 aa)) is disordered.

The protein belongs to the ABC transporter superfamily. ABCB family. Mitochondrial peptide exporter (TC 3.A.1.212) subfamily.

It localises to the mitochondrion inner membrane. This chain is ATP-dependent permease MDL2, mitochondrial (MDL2), found in Saccharomyces cerevisiae (strain ATCC 204508 / S288c) (Baker's yeast).